A 397-amino-acid polypeptide reads, in one-letter code: Elongation factor Tu (397 aa).

The tr-type G domain occupies 10 to 206; that stretch reads KPHCNIGTIG…AVDTWIPDPQ (197 aa). The segment at 19 to 26 is G1; the sequence is GHVDHGKT. Residue 19–26 participates in GTP binding; that stretch reads GHVDHGKT. Threonine 26 contacts Mg(2+). A G2 region spans residues 61–65; the sequence is GITIS. The segment at 82–85 is G3; the sequence is DCPG. Residues 82–86 and 137–140 contribute to the GTP site; these read DCPGH and NKCD. Positions 137–140 are G4; it reads NKCD. The segment at 175–177 is G5; the sequence is SAL.

This sequence belongs to the TRAFAC class translation factor GTPase superfamily. Classic translation factor GTPase family. EF-Tu/EF-1A subfamily. As to quaternary structure, monomer.

The protein resides in the cytoplasm. The catalysed reaction is GTP + H2O = GDP + phosphate + H(+). GTP hydrolase that promotes the GTP-dependent binding of aminoacyl-tRNA to the A-site of ribosomes during protein biosynthesis. This is Elongation factor Tu from Lachnoclostridium phytofermentans (strain ATCC 700394 / DSM 18823 / ISDg) (Clostridium phytofermentans).